The following is a 279-amino-acid chain: 4-deoxy-L-threo-5-hexosulose-uronate ketol-isomerase (279 aa).

4 residues coordinate Zn(2+): histidine 197, histidine 199, glutamate 204, and histidine 246.

Belongs to the KduI family. It depends on Zn(2+) as a cofactor.

The catalysed reaction is 5-dehydro-4-deoxy-D-glucuronate = 3-deoxy-D-glycero-2,5-hexodiulosonate. The protein operates within glycan metabolism; pectin degradation; 2-dehydro-3-deoxy-D-gluconate from pectin: step 4/5. In terms of biological role, catalyzes the isomerization of 5-dehydro-4-deoxy-D-glucuronate to 3-deoxy-D-glycero-2,5-hexodiulosonate. The protein is 4-deoxy-L-threo-5-hexosulose-uronate ketol-isomerase of Kineococcus radiotolerans (strain ATCC BAA-149 / DSM 14245 / SRS30216).